Here is an 829-residue protein sequence, read N- to C-terminus: Dipeptidyl peptidase family member 2 (829 aa).

At 1–27 (MENDNYDVEEQGCSVFNGKHGYFARSC) the chain is on the cytoplasmic side. Residues 28 to 48 (CVVFILIICVIFVFSVIFTFM) traverse the membrane as a helical; Signal-anchor for type II membrane protein segment. Topologically, residues 49 to 829 (QNPINLNSDN…DCFKSNLDLL (781 aa)) are extracellular. N-linked (GlcNAc...) asparagine glycosylation is found at N61, N66, N183, N209, N314, and N359. An intrachain disulfide couples C514 to C533. S691 acts as the Charge relay system in catalysis. C711 and C821 are oxidised to a cystine. N754 is a glycosylation site (N-linked (GlcNAc...) asparagine). Active-site charge relay system residues include D768 and H800.

Belongs to the peptidase S9B family. DPPIV subfamily.

The protein resides in the cell membrane. Functionally, removes N-terminal dipeptides sequentially from polypeptides. Essential for control of distal tip cell migration. This chain is Dipeptidyl peptidase family member 2 (dpf-2), found in Caenorhabditis elegans.